Consider the following 705-residue polypeptide: Polyribonucleotide nucleotidyltransferase (705 aa).

Positions 487 and 493 each coordinate Mg(2+). A KH domain is found at 554–613 (PKILTMAIEPDKIRDVIGPSGKQINQIIDETGVKIDIEQDGSIFISSTDNEMNKKAKQII). The region spanning 623 to 691 (GQIYLGKVKR…RQGRVNLSRK (69 aa)) is the S1 motif domain.

The protein belongs to the polyribonucleotide nucleotidyltransferase family. Requires Mg(2+) as cofactor.

It is found in the cytoplasm. The enzyme catalyses RNA(n+1) + phosphate = RNA(n) + a ribonucleoside 5'-diphosphate. In terms of biological role, involved in mRNA degradation. Catalyzes the phosphorolysis of single-stranded polyribonucleotides processively in the 3'- to 5'-direction. In Oceanobacillus iheyensis (strain DSM 14371 / CIP 107618 / JCM 11309 / KCTC 3954 / HTE831), this protein is Polyribonucleotide nucleotidyltransferase.